The following is a 120-amino-acid chain: UPF0231 protein YacL (120 aa).

Belongs to the UPF0231 family.

In Shigella flexneri, this protein is UPF0231 protein YacL (yacL).